A 251-amino-acid chain; its full sequence is Ditrans,polycis-undecaprenyl-diphosphate synthase ((2E,6E)-farnesyl-diphosphate specific) (251 aa).

The active site involves D26. D26 lines the Mg(2+) pocket. Substrate is bound by residues 27–30 (GNGR), W31, R39, H43, and 71–73 (SSE). Residue N74 is the Proton acceptor of the active site. Substrate-binding positions include W75, R77, R194, and 200–202 (RIS). E213 contributes to the Mg(2+) binding site.

This sequence belongs to the UPP synthase family. Homodimer. Mg(2+) is required as a cofactor.

It catalyses the reaction 8 isopentenyl diphosphate + (2E,6E)-farnesyl diphosphate = di-trans,octa-cis-undecaprenyl diphosphate + 8 diphosphate. Catalyzes the sequential condensation of isopentenyl diphosphate (IPP) with (2E,6E)-farnesyl diphosphate (E,E-FPP) to yield (2Z,6Z,10Z,14Z,18Z,22Z,26Z,30Z,34E,38E)-undecaprenyl diphosphate (di-trans,octa-cis-UPP). UPP is the precursor of glycosyl carrier lipid in the biosynthesis of bacterial cell wall polysaccharide components such as peptidoglycan and lipopolysaccharide. This chain is Ditrans,polycis-undecaprenyl-diphosphate synthase ((2E,6E)-farnesyl-diphosphate specific), found in Buchnera aphidicola subsp. Acyrthosiphon pisum (strain APS) (Acyrthosiphon pisum symbiotic bacterium).